The sequence spans 584 residues: Proteasome-associated ATPase (584 aa).

The stretch at 8 to 90 (RHAERDRDEL…KEEVDRLSQP (83 aa)) forms a coiled coil. An ATP-binding site is contributed by 272–277 (GCGKTL). Residues 583 to 584 (YL) form a docks into pockets in the proteasome alpha-ring region.

This sequence belongs to the AAA ATPase family. Homohexamer. Assembles into a hexameric ring structure that caps the 20S proteasome core. Strongly interacts with the prokaryotic ubiquitin-like protein Pup through a hydrophobic interface; the interacting region of ARC lies in its N-terminal coiled-coil domain. There is one Pup binding site per ARC hexamer ring. Upon ATP-binding, the C-terminus of ARC interacts with the alpha-rings of the proteasome core, possibly by binding to the intersubunit pockets.

Its pathway is protein degradation; proteasomal Pup-dependent pathway. Its function is as follows. ATPase which is responsible for recognizing, binding, unfolding and translocation of pupylated proteins into the bacterial 20S proteasome core particle. May be essential for opening the gate of the 20S proteasome via an interaction with its C-terminus, thereby allowing substrate entry and access to the site of proteolysis. Thus, the C-termini of the proteasomal ATPase may function like a 'key in a lock' to induce gate opening and therefore regulate proteolysis. In Thermobifida fusca (strain YX), this protein is Proteasome-associated ATPase.